The primary structure comprises 366 residues: Peptide chain release factor 2 (366 aa).

N5-methylglutamine is present on Gln-246.

The protein belongs to the prokaryotic/mitochondrial release factor family. In terms of processing, methylated by PrmC. Methylation increases the termination efficiency of RF2.

The protein resides in the cytoplasm. Peptide chain release factor 2 directs the termination of translation in response to the peptide chain termination codons UGA and UAA. The chain is Peptide chain release factor 2 from Frankia casuarinae (strain DSM 45818 / CECT 9043 / HFP020203 / CcI3).